Here is a 352-residue protein sequence, read N- to C-terminus: Ion-translocating oxidoreductase complex subunit D (352 aa).

4 helical membrane-spanning segments follow: residues 20–40 (IMLLVLIAALPGIAAQTWFFG), 42–62 (GTLFQIVLAAITALVAEAIVL), 69–91 (VASHLQDYSALLTGLLLAVSIPP), and 123–143 (PAMIGYVVLLISFPVQMTSWL). The residue at position 187 (Thr187) is an FMN phosphoryl threonine. Transmembrane regions (helical) follow at residues 215 to 235 (LAGVGWQWVNLAWLVGGVFLL), 242 to 262 (WHIPVSFLLTLALCAALGWLF), 267 to 287 (LASPQLHLLSGATMLGAFFIL), 301 to 321 (LIFGALAGVLVWLIRSFGGYP), and 322 to 342 (DGVAFAVLLANITVPLIDYYT).

Belongs to the NqrB/RnfD family. The complex is composed of six subunits: RsxA, RsxB, RsxC, RsxD, RsxE and RsxG. It depends on FMN as a cofactor.

Its subcellular location is the cell inner membrane. Part of a membrane-bound complex that couples electron transfer with translocation of ions across the membrane. Required to maintain the reduced state of SoxR. The protein is Ion-translocating oxidoreductase complex subunit D of Salmonella paratyphi A (strain ATCC 9150 / SARB42).